The sequence spans 995 residues: Zinc finger protein ZFPM1 (995 aa).

Residues 1-14 (MSRRKQSNPRQIKR) show a composition bias toward basic residues. The segment at 1 to 103 (MSRRKQSNPR…EAAMASPWSG (103 aa)) is disordered. Residues 15–36 (SLRDMEAGEEAKAMDSSPKEQE) show a composition bias toward basic and acidic residues. Composition is skewed to acidic residues over residues 67–78 (SPEDPEDMEGQE) and 86–95 (EEKEEKEEEA). A phosphoserine mark is found at Ser-99 and Ser-143. A CCHC FOG-type 1 zinc finger spans residues 249–282 (VINKDVFPCKDCGIWYRSERNLQAHLLYYCASRQ). The Zn(2+) site is built by Cys-257, Cys-260, His-273, and Cys-278. At Ser-286 the chain carries Phosphoserine. 3 consecutive C2H2-type zinc fingers follow at residues 303 to 327 (RVCPFPQCRKSCPSASSLEIHMRSH), 333 to 355 (FVCLICLSAFTTKANCERHLKVH), and 361 to 384 (GVCHNCGFISTTRDILYSHLVTNH). The segment at 343-354 (TTKANCERHLKV) is interaction with TACC3. Residues Ser-397, Ser-497, and Ser-500 each carry the phosphoserine modification. The tract at residues 424–526 (PLVPADKAPT…SSPGPGELTM (103 aa)) is disordered. Residues 509 to 525 (ELSSPTPGSSPGPGELT) are compositionally biased toward low complexity. The segment at 584–617 (FSGTKGATCFECEITFNNINNFYVHKRLYCSGRR) adopts a CCHC FOG-type 2 zinc-finger fold. Cys-592, Cys-595, His-608, and Cys-613 together coordinate Zn(2+). The tract at residues 616 to 694 (RRAPEDPPTV…SVDDAEDDPS (79 aa)) is disordered. The span at 630 to 652 (AATGPARAPAGAAAEPDPSRSSP) shows a compositional bias: low complexity. Ser-651 and Ser-684 each carry phosphoserine. The CCHC FOG-type 3 zinc-finger motif lies at 690–723 (EDDPSRTLCEACNIRFSRHETYTVHKRYYCASRH). Zn(2+) is bound by residues Cys-698, Cys-701, His-714, and Cys-719. The interval 721 to 827 (SRHDPPPRRP…PRRQSPDAPT (107 aa)) is disordered. Pro residues-rich tracts occupy residues 728-740 (RRPPAPTTAPGPA) and 764-779 (GAPPPAAGPAPVPVVP). Residues 785–800 (LPSSPRPGSASAGPAP) are compositionally biased toward low complexity. The residue at position 803 (Ser-803) is a Phosphoserine. The interaction with CTBP2 stretch occupies residues 811–817 (PIDLSKR). At Ser-822 the chain carries Phosphoserine. A CCHC FOG-type 4 zinc finger spans residues 830-863 (PALADYHECTACRVSFHSLEAYLAHKKYSCPAAP). The Zn(2+) site is built by Cys-838, Cys-841, His-854, and Cys-859. A C2H2-type 4 zinc finger spans residues 868-891 (ALCPYCPPNGRVRGDLVEHLRQAH). Positions 892–960 (GLQVAKPAAS…APAPAPGGGG (69 aa)) are disordered. Residues 908-922 (TPAERAPRDSPDGRA) show a composition bias toward basic and acidic residues. A phosphoserine mark is found at Ser-925 and Ser-927. A CCHC FOG-type 5 zinc finger spans residues 957–990 (GGGGGHRYCRLCNIRFSSLSTFIAHKKYYCSSHA). Zn(2+)-binding residues include Cys-965, Cys-968, His-981, and Cys-986.

This sequence belongs to the FOG (Friend of GATA) family. As to quaternary structure, interacts with the N-terminal zinc-finger of GATA1, GATA2 and GATA3. Interacts with corepressor CTBP2; this interaction is however not essential for corepressor activity in erythropoiesis. Interacts with TACC3. Mainly expressed in hematopoietic tissues. Expressed in the spleen, a primary site of hematopoiesis in the adult mouse, as well as in the liver and testis, but not in the heart, brain, lung, kidney, or skeletal muscle. Among hematopoietic cell lines, it is strongly expressed in erythroid and megakaryocytic cell lines. Expressed at low level in several lymphoid and early myeloid cell lines. Not expressed in mast cell and macrophage lines. Expressed in the heart, where it colocalizes with GATA4, GATA5 and GATA6.

Its subcellular location is the nucleus. In terms of biological role, transcription regulator that plays an essential role in erythroid and megakaryocytic cell differentiation. Essential cofactor that acts via the formation of a heterodimer with transcription factors of the GATA family GATA1, GATA2 and GATA3. Such heterodimer can both activate or repress transcriptional activity, depending on the cell and promoter context. The heterodimer formed with GATA proteins is essential to activate expression of genes such as NFE2, ITGA2B, alpha- and beta-globin, while it represses expression of KLF1. May be involved in regulation of some genes in gonads. May also be involved in cardiac development, in a non-redundant way with ZFPM2/FOG2. In Mus musculus (Mouse), this protein is Zinc finger protein ZFPM1 (Zfpm1).